The following is a 1183-amino-acid chain: Translation initiation factor IF-2 (1183 aa).

Disordered regions lie at residues 65–512 (SSKN…KVHI) and 540–579 (LARPSKPKVGKRNNGKPLTALKKRKKETTRQRQRRRAMEL). Residues 83–99 (TQKDQKTEPKKKNHDQT) are compositionally biased toward basic and acidic residues. Over residues 100 to 130 (ELSQAKLNTLLKPSQTLIKSQGSSQANNQKA) the composition is skewed to polar residues. Over residues 220-229 (PKIDIQDKKP) the composition is skewed to basic and acidic residues. Polar residues predominate over residues 231–270 (QPNNQKAKTRINQGEISPQKVGQGNIQKIKSQNKQNAPSR). A compositionally biased stretch (basic and acidic residues) spans 288-304 (IRKEKPVNKPHTNEVRN). Polar residues-rich tracts occupy residues 321-336 (ANRQGLSNRPGSNNRI) and 357-367 (NRTTQGQNRPG). Residues 485–499 (GRPDWDDSAKLDALR) show a composition bias toward basic and acidic residues. Basic residues-rich tracts occupy residues 544 to 553 (SKPKVGKRNN) and 560 to 574 (LKKRKKETTRQRQRR). A tr-type G domain is found at 675 to 847 (RRPPVVTVMG…VLLVTEVEDL (173 aa)). The segment at 684-691 (GHVDHGKT) is G1. 684–691 (GHVDHGKT) provides a ligand contact to GTP. The interval 709–713 (GITQH) is G2. Positions 734–737 (DTPG) are G3. GTP contacts are provided by residues 734-738 (DTPGH) and 788-791 (NKID). The tract at residues 788–791 (NKID) is G4. Residues 824–826 (SAI) are G5.

The protein belongs to the TRAFAC class translation factor GTPase superfamily. Classic translation factor GTPase family. IF-2 subfamily.

The protein resides in the cytoplasm. Functionally, one of the essential components for the initiation of protein synthesis. Protects formylmethionyl-tRNA from spontaneous hydrolysis and promotes its binding to the 30S ribosomal subunits. Also involved in the hydrolysis of GTP during the formation of the 70S ribosomal complex. This Prochlorococcus marinus (strain NATL2A) protein is Translation initiation factor IF-2.